The sequence spans 338 residues: Glycerol-3-phosphate dehydrogenase [NAD(P)+] (338 aa).

3 residues coordinate NADPH: serine 13, tryptophan 14, and lysine 108. Sn-glycerol 3-phosphate is bound by residues lysine 108, glycine 139, and serine 141. Alanine 143 is a binding site for NADPH. 5 residues coordinate sn-glycerol 3-phosphate: lysine 194, aspartate 247, serine 257, arginine 258, and asparagine 259. Lysine 194 (proton acceptor) is an active-site residue. Arginine 258 contacts NADPH. NADPH is bound by residues valine 282 and glutamate 284.

This sequence belongs to the NAD-dependent glycerol-3-phosphate dehydrogenase family.

It localises to the cytoplasm. The enzyme catalyses sn-glycerol 3-phosphate + NAD(+) = dihydroxyacetone phosphate + NADH + H(+). It carries out the reaction sn-glycerol 3-phosphate + NADP(+) = dihydroxyacetone phosphate + NADPH + H(+). It participates in membrane lipid metabolism; glycerophospholipid metabolism. Functionally, catalyzes the reduction of the glycolytic intermediate dihydroxyacetone phosphate (DHAP) to sn-glycerol 3-phosphate (G3P), the key precursor for phospholipid synthesis. This chain is Glycerol-3-phosphate dehydrogenase [NAD(P)+], found in Listeria monocytogenes serotype 4a (strain HCC23).